A 23-amino-acid chain; its full sequence is Septenin 2d (23 aa).

In terms of tissue distribution, expressed in skin glands.

It is found in the secreted. In terms of biological role, may act as an antimicrobial peptide. This Osteopilus septentrionalis (Cuban treefrog) protein is Septenin 2d.